We begin with the raw amino-acid sequence, 387 residues long: Queuine tRNA-ribosyltransferase (387 aa).

The active-site Proton acceptor is Asp102. Substrate is bound by residues 102–106 (DSGGF), Asp156, Gln205, and Gly232. Positions 263–269 (GVGTPED) are RNA binding. Asp282 functions as the Nucleophile in the catalytic mechanism. The RNA binding; important for wobble base 34 recognition stretch occupies residues 287-291 (TRNAR). Positions 320, 322, 325, and 351 each coordinate Zn(2+).

The protein belongs to the queuine tRNA-ribosyltransferase family. In terms of assembly, homodimer. Within each dimer, one monomer is responsible for RNA recognition and catalysis, while the other monomer binds to the replacement base PreQ1. Zn(2+) serves as cofactor.

It carries out the reaction 7-aminomethyl-7-carbaguanine + guanosine(34) in tRNA = 7-aminomethyl-7-carbaguanosine(34) in tRNA + guanine. It functions in the pathway tRNA modification; tRNA-queuosine biosynthesis. Functionally, catalyzes the base-exchange of a guanine (G) residue with the queuine precursor 7-aminomethyl-7-deazaguanine (PreQ1) at position 34 (anticodon wobble position) in tRNAs with GU(N) anticodons (tRNA-Asp, -Asn, -His and -Tyr). Catalysis occurs through a double-displacement mechanism. The nucleophile active site attacks the C1' of nucleotide 34 to detach the guanine base from the RNA, forming a covalent enzyme-RNA intermediate. The proton acceptor active site deprotonates the incoming PreQ1, allowing a nucleophilic attack on the C1' of the ribose to form the product. After dissociation, two additional enzymatic reactions on the tRNA convert PreQ1 to queuine (Q), resulting in the hypermodified nucleoside queuosine (7-(((4,5-cis-dihydroxy-2-cyclopenten-1-yl)amino)methyl)-7-deazaguanosine). This is Queuine tRNA-ribosyltransferase from Polaromonas naphthalenivorans (strain CJ2).